Here is a 46-residue protein sequence, read N- to C-terminus: Viscotoxin-1-PS (46 aa).

3 disulfide bridges follow: C3–C40, C4–C32, and C16–C26.

Belongs to the plant thionin (TC 1.C.44) family.

It localises to the secreted. Thionins are small plant proteins which are toxic to animal cells. They seem to exert their toxic effect at the level of the cell membrane. Their precise function is not known. The sequence is that of Viscotoxin-1-PS (THI2.4) from Viscum album (European mistletoe).